Reading from the N-terminus, the 658-residue chain is DNA mismatch repair protein MutL (658 aa).

Residues 114-130 (RQEDSSHATQVKAEDGK) show a composition bias toward basic and acidic residues. The segment at 114–137 (RQEDSSHATQVKAEDGKLSSPTAA) is disordered.

The protein belongs to the DNA mismatch repair MutL/HexB family.

Functionally, this protein is involved in the repair of mismatches in DNA. It is required for dam-dependent methyl-directed DNA mismatch repair. May act as a 'molecular matchmaker', a protein that promotes the formation of a stable complex between two or more DNA-binding proteins in an ATP-dependent manner without itself being part of a final effector complex. The chain is DNA mismatch repair protein MutL from Neisseria meningitidis serogroup C / serotype 2a (strain ATCC 700532 / DSM 15464 / FAM18).